The following is a 92-amino-acid chain: Small ribosomal subunit protein uS19 (92 aa).

Belongs to the universal ribosomal protein uS19 family.

Protein S19 forms a complex with S13 that binds strongly to the 16S ribosomal RNA. The polypeptide is Small ribosomal subunit protein uS19 (Trichlorobacter lovleyi (strain ATCC BAA-1151 / DSM 17278 / SZ) (Geobacter lovleyi)).